Here is a 173-residue protein sequence, read N- to C-terminus: NADH-ubiquinone oxidoreductase chain 6 (173 aa).

The next 5 membrane-spanning stretches (helical) occupy residues 1–21 (MTYLVSLFLLGLVLGLVAVAS), 24–44 (APYFAALGLVVAAGVGCGVLV), 53–73 (LVLFLIYLGGMLVVFAYSAAL), 87–107 (VLGYVVVYTVGVVLVAGLFWG), and 141–161 (GGMLIACAWVLLLTLFVVLEL).

Belongs to the complex I subunit 6 family.

It localises to the mitochondrion membrane. The catalysed reaction is a ubiquinone + NADH + 5 H(+)(in) = a ubiquinol + NAD(+) + 4 H(+)(out). In terms of biological role, core subunit of the mitochondrial membrane respiratory chain NADH dehydrogenase (Complex I) that is believed to belong to the minimal assembly required for catalysis. Complex I functions in the transfer of electrons from NADH to the respiratory chain. The immediate electron acceptor for the enzyme is believed to be ubiquinone. The chain is NADH-ubiquinone oxidoreductase chain 6 (MT-ND6) from Oncorhynchus mykiss (Rainbow trout).